The chain runs to 513 residues: Probable cytosol aminopeptidase (513 aa).

Positions 277 and 282 each coordinate Mn(2+). Residue K289 is part of the active site. D300, D359, and E361 together coordinate Mn(2+). R363 is a catalytic residue.

Belongs to the peptidase M17 family. The cofactor is Mn(2+).

It localises to the cytoplasm. The catalysed reaction is Release of an N-terminal amino acid, Xaa-|-Yaa-, in which Xaa is preferably Leu, but may be other amino acids including Pro although not Arg or Lys, and Yaa may be Pro. Amino acid amides and methyl esters are also readily hydrolyzed, but rates on arylamides are exceedingly low.. It catalyses the reaction Release of an N-terminal amino acid, preferentially leucine, but not glutamic or aspartic acids.. Presumably involved in the processing and regular turnover of intracellular proteins. Catalyzes the removal of unsubstituted N-terminal amino acids from various peptides. The sequence is that of Probable cytosol aminopeptidase from Mycobacterium sp. (strain KMS).